We begin with the raw amino-acid sequence, 294 residues long: RNA polymerase sigma-K factor (294 aa).

Positions 1 to 20 (MVTGVFAALGFVVKELVFLV) are excised as a propeptide. Positions 1 to 156 (MVTGVFAALG…VNNCFFIFKS (156 aa)) are encoded by spoIVCB. The short motif at 79–92 (DLISIGTIGLIKGI) is the Polymerase core binding element. The not present in recombined mature factor stretch occupies residues 114–165 (EIVITKGGCIHPSLIRFNIYGVRIHNGNFFHDKVNNCFFIFKSMPPLFVMNN). The interval 157 to 294 (MPPLFVMNNE…KEKRKKAKGK (138 aa)) is encoded by spoIIIC. Residues 251 to 270 (QREIAKELGISRSYVSRIEK) constitute a DNA-binding region (H-T-H motif).

Belongs to the sigma-70 factor family.

In terms of biological role, sigma factors are initiation factors that promote the attachment of RNA polymerase to specific initiation sites and are then released. This sigma factor is responsible for the expression of sporulation specific genes in the mother cell. In Bacillus subtilis (strain 168), this protein is RNA polymerase sigma-K factor (sigK).